Consider the following 246-residue polypeptide: Trypsin V-B (246 aa).

Positions 1–15 (MKICIFFTLLGTVAA) are cleaved as a signal peptide. Positions 16 to 24 (FPTEDNDDR) are cleaved as a propeptide — activation peptide. Positions 25 to 244 (IVGGYTCQEH…YLNWIQQTVA (220 aa)) constitute a Peptidase S1 domain. Intrachain disulfides connect Cys-31-Cys-160, Cys-49-Cys-65, Cys-133-Cys-233, Cys-140-Cys-206, Cys-171-Cys-185, and Cys-196-Cys-220. His-64 serves as the catalytic Charge relay system. Ca(2+) is bound by residues Glu-76, Asn-78, and Glu-86. Asp-108 acts as the Charge relay system in catalysis. Catalysis depends on Ser-200, which acts as the Charge relay system.

It belongs to the peptidase S1 family. Ca(2+) is required as a cofactor.

The protein resides in the secreted. The protein localises to the extracellular space. It carries out the reaction Preferential cleavage: Arg-|-Xaa, Lys-|-Xaa.. The protein is Trypsin V-B of Rattus norvegicus (Rat).